Reading from the N-terminus, the 260-residue chain is DNA-directed RNA polymerase subunit Rpo3 (260 aa).

Belongs to the archaeal Rpo3/eukaryotic RPB3 RNA polymerase subunit family. In terms of assembly, part of the RNA polymerase complex.

The protein resides in the cytoplasm. It catalyses the reaction RNA(n) + a ribonucleoside 5'-triphosphate = RNA(n+1) + diphosphate. DNA-dependent RNA polymerase (RNAP) catalyzes the transcription of DNA into RNA using the four ribonucleoside triphosphates as substrates. The sequence is that of DNA-directed RNA polymerase subunit Rpo3 from Pyrobaculum aerophilum (strain ATCC 51768 / DSM 7523 / JCM 9630 / CIP 104966 / NBRC 100827 / IM2).